An 87-amino-acid chain; its full sequence is U3-theraphotoxin-Hhn1a 16 (87 aa).

The first 24 residues, Met-1–Ala-24, serve as a signal peptide directing secretion. The propeptide occupies Ser-25 to Arg-52. 3 disulfide bridges follow: Cys-54–Cys-67, Cys-61–Cys-72, and Cys-66–Cys-79.

The protein belongs to the neurotoxin 10 (Hwtx-1) family. 51 (Hntx-8) subfamily. Hntx-8 sub-subfamily. In terms of tissue distribution, expressed by the venom gland.

The protein localises to the secreted. Functionally, ion channel inhibitor. This Cyriopagopus hainanus (Chinese bird spider) protein is U3-theraphotoxin-Hhn1a 16.